Consider the following 123-residue polypeptide: Thioredoxin H-type (123 aa).

Residues 2–119 (AATAELIPAG…IEAKLLKHSQ (118 aa)) form the Thioredoxin domain. Cysteine 45 and cysteine 48 are oxidised to a cystine.

It belongs to the thioredoxin family. Plant H-type subfamily.

The protein localises to the cytoplasm. Functionally, participates in various redox reactions through the reversible oxidation of the active center dithiol to a disulfide. The H form is known to activate a number of cytosolic enzymes. This chain is Thioredoxin H-type (PEC-2), found in Brassica campestris (Field mustard).